We begin with the raw amino-acid sequence, 553 residues long: CTP synthase (553 aa).

Positions 1 to 270 (MTKFVFVTGG…DRIICEELRI (270 aa)) are amidoligase domain. A CTP-binding site is contributed by S13. UTP is bound at residue S13. ATP is bound by residues 14–19 (SLGKGI) and D71. Mg(2+) is bound by residues D71 and E144. CTP is bound by residues 151–153 (DIE), 191–196 (KTKPTQ), and K227. Residues 191 to 196 (KTKPTQ) and K227 each bind UTP. A Glutamine amidotransferase type-1 domain is found at 295–547 (TIGMVGKYVD…VEAALAHQQN (253 aa)). G356 lines the L-glutamine pocket. C383 serves as the catalytic Nucleophile; for glutamine hydrolysis. L-glutamine is bound by residues 384–387 (LGMQ), E407, and R473. Residues H520 and E522 contribute to the active site.

It belongs to the CTP synthase family. In terms of assembly, homotetramer.

The catalysed reaction is UTP + L-glutamine + ATP + H2O = CTP + L-glutamate + ADP + phosphate + 2 H(+). It catalyses the reaction L-glutamine + H2O = L-glutamate + NH4(+). It carries out the reaction UTP + NH4(+) + ATP = CTP + ADP + phosphate + 2 H(+). The protein operates within pyrimidine metabolism; CTP biosynthesis via de novo pathway; CTP from UDP: step 2/2. With respect to regulation, allosterically activated by GTP, when glutamine is the substrate; GTP has no effect on the reaction when ammonia is the substrate. The allosteric effector GTP functions by stabilizing the protein conformation that binds the tetrahedral intermediate(s) formed during glutamine hydrolysis. Inhibited by the product CTP, via allosteric rather than competitive inhibition. Functionally, catalyzes the ATP-dependent amination of UTP to CTP with either L-glutamine or ammonia as the source of nitrogen. Regulates intracellular CTP levels through interactions with the four ribonucleotide triphosphates. This Ralstonia pickettii (strain 12J) protein is CTP synthase.